A 78-amino-acid chain; its full sequence is Defensin-like protein 74 (78 aa).

An N-terminal signal peptide occupies residues 1–28 (MNYKIGIMSLLVITSIIFLFLVPDKVEA). 4 disulfides stabilise this stretch: C32/C73, C36/C58, C42/C71, and C46/C72.

It belongs to the DEFL family.

The protein localises to the secreted. The chain is Defensin-like protein 74 (LCR43) from Arabidopsis thaliana (Mouse-ear cress).